We begin with the raw amino-acid sequence, 166 residues long: Telethonin (166 aa).

Serine 39 carries the post-translational modification Phosphoserine. The segment at 145-166 is disordered; that stretch reads VSKPGTLRRSLSRSMSQEAQRG. Over residues 156–166 the composition is skewed to polar residues; sequence SRSMSQEAQRG.

In terms of assembly, interacts with MYOZ1, MYOZ2 and MYOZ3. Interacts with CSRP3. Interacts directly with the N-terminal Ig-like domains of 2 titin (TTN) molecules. Interacts with ANKRD2; the interaction is direct.

It localises to the cytoplasm. The protein localises to the myofibril. It is found in the sarcomere. Functionally, muscle assembly regulating factor. Mediates the antiparallel assembly of titin (TTN) molecules at the sarcomeric Z-disk. This chain is Telethonin (TCAP), found in Bos taurus (Bovine).